Reading from the N-terminus, the 874-residue chain is Cap-specific mRNA (nucleoside-2'-O-)-methyltransferase 1A (874 aa).

Residues 1–10 (MSERGDDDRT) are compositionally biased toward basic and acidic residues. The tract at residues 1-64 (MSERGDDDRT…APPTKQKTKA (64 aa)) is disordered. The 47-residue stretch at 60–106 (QKTKAEEMMERMGYKAGEGLGKNKQGIQEPVALSTQRGKTGLGHEGA) folds into the G-patch domain. Residues 211–440 (FFQNRAAMKT…ERYITCKGLR (230 aa)) enclose the RrmJ-type SAM-dependent 2'-O-MTase domain. Glycine 273 and aspartate 354 together coordinate S-adenosyl-L-methionine. The active-site Proton acceptor is lysine 394. The segment at 535–555 (PNKQRPRGGDRGSRNGNQERL) is disordered.

The catalysed reaction is a 5'-end (N(7)-methyl 5'-triphosphoguanosine)-ribonucleoside in mRNA + S-adenosyl-L-methionine = a 5'-end (N(7)-methyl 5'-triphosphoguanosine)-(2'-O-methyl-ribonucleoside) in mRNA + S-adenosyl-L-homocysteine + H(+). Its function is as follows. S-adenosyl-L-methionine-dependent methyltransferase that mediates mRNA cap1 2'-O-ribose methylation to the 5'-cap structure of mRNAs. Methylates the ribose of the first nucleotide of a m(7)GpppG-capped mRNA to produce m(7)GpppNmp (cap1). Cap1 modification is linked to higher levels of translation. This Caenorhabditis briggsae protein is Cap-specific mRNA (nucleoside-2'-O-)-methyltransferase 1A.